Reading from the N-terminus, the 352-residue chain is C-X-C chemokine receptor type 4 (352 aa).

The important for chemokine binding and signaling stretch occupies residues 1-21; that stretch reads MEGISIYTSDNYTEEMGSGDY. Residues 1-38 lie on the Extracellular side of the membrane; it reads MEGISIYTSDNYTEEMGSGDYDSIKEPCFREENAHFNR. Y7 is modified (sulfotyrosine). N-linked (GlcNAc...) asparagine glycosylation occurs at N11. Position 12 is a sulfotyrosine (Y12). S18 carries an O-linked (Xyl...) (chondroitin sulfate) serine glycan. The residue at position 21 (Y21) is a Sulfotyrosine. 2 disulfides stabilise this stretch: C28/C274 and C109/C186. The chain crosses the membrane as a helical span at residues 39-63; sequence IFLPTIYSIIFLTGIVGNGLVILVM. Residues 64–77 are Cytoplasmic-facing; the sequence is GYQKKLRSMTDKYR. A helical transmembrane segment spans residues 78 to 99; sequence LHLSVADLLFVITLPFWAVDAV. The chemokine binding stretch occupies residues 94-97; it reads WAVD. Topologically, residues 100-110 are extracellular; it reads ANWYFGNFLCK. A helical transmembrane segment spans residues 111-130; that stretch reads AVHVIYTVNLYSSVLILAFI. The chemokine binding stretch occupies residues 113-117; the sequence is HVIYT. Over 131–154 the chain is Cytoplasmic; it reads SLDRYLAIVHATNSQRPRKLLAEK. The Important for signaling motif lies at 133–135; that stretch reads DRY. Positions 135-147 are involved in dimerization; when bound to chemokine; sequence YLAIVHATNSQRP. A helical transmembrane segment spans residues 155–174; sequence VVYVGVWIPALLLTIPDFIF. Topologically, residues 175–195 are extracellular; it reads ASVSEADDRYICDRFYPNDLW. The interval 186 to 190 is chemokine binding, important for signaling; that stretch reads CDRFY. The involved in dimerization stretch occupies residues 191 to 210; sequence PNDLWVVVFQFQHIMVGLIL. The helical transmembrane segment at 196-216 threads the bilayer; that stretch reads VVVFQFQHIMVGLILPGIVIL. The Cytoplasmic segment spans residues 217-241; sequence SCYCIIISKLSHSKGHQKRKALKTT. Residues 242–261 traverse the membrane as a helical segment; that stretch reads VILILAFFACWLPYYIGISI. Residues 262 to 282 are Extracellular-facing; it reads DSFILLEIIKQGCEFENTVHK. The segment at 266-268 is involved in dimerization; it reads LLE. A helical membrane pass occupies residues 283 to 302; that stretch reads WISITEALAFFHCCLNPILY. Topologically, residues 303–352 are cytoplasmic; the sequence is AFLGAKFKTSAQHALTSVSRGSSLKILSKGKRGGHSSVSTESESSSFHSS. Phosphoserine is present on residues S319 and S321. A phosphoserine; by PKC and GRK6 mark is found at S324 and S325. Residues 329-352 form a disordered region; the sequence is LSKGKRGGHSSVSTESESSSFHSS. S330 carries the post-translational modification Phosphoserine; by GRK6. K331 is covalently cross-linked (Glycyl lysine isopeptide (Lys-Gly) (interchain with G-Cter in ubiquitin)). Residues 337 to 352 show a composition bias toward low complexity; it reads HSSVSTESESSSFHSS. S339 carries the post-translational modification Phosphoserine; by GRK6. 2 positions are modified to phosphoserine: S348 and S351.

It belongs to the G-protein coupled receptor 1 family. Monomer. Can form homodimers. Interacts with CD164. Interacts with ARRB2; the interaction is dependent on the C-terminal phosphorylation of CXCR4 and allows activation of MAPK1 and MAPK3. Interacts with ARR3; the interaction is dependent on the C-terminal phosphorylation of CXCR4 and modulates calcium mobilization. Interacts with RNF113A; the interaction, enhanced by CXCL12, promotes CXCR4 ubiquitination and subsequent degradation. Interacts (via the cytoplasmic C-terminal) with ITCH (via the WW domains I and II); the interaction, enhanced by CXCL12, promotes CXCR4 ubiquitination and leads to its degradation. Interacts with extracellular ubiquitin. Interacts with DBN1; this interaction is enhanced by antigenic stimulation. Following LPS binding, may form a complex with GDF5, HSP90AA1 and HSPA8. Phosphorylated on agonist stimulation. Rapidly phosphorylated on serine and threonine residues in the C-terminal. Phosphorylation at Ser-324 and Ser-325 leads to recruitment of ITCH, ubiquitination and protein degradation. In terms of processing, ubiquitinated after ligand binding, leading to its degradation. Ubiquitinated by ITCH at the cell membrane on agonist stimulation. The ubiquitin-dependent mechanism, endosomal sorting complex required for transport (ESCRT), then targets CXCR4 for lysosomal degradation. This process is dependent also on prior Ser-/Thr-phosphorylation in the C-terminal of CXCR4. Also binding of ARRB1 to STAM negatively regulates CXCR4 sorting to lysosomes though modulating ubiquitination of SFR5S. Post-translationally, sulfation is required for efficient binding of CXCL12/SDF-1alpha and promotes its dimerization. O- and N-glycosylated. N-glycosylation can mask coreceptor function. The O-glycosylation chondroitin sulfate attachment does not affect interaction with CXCL12/SDF-1alpha nor its coreceptor activity.

It localises to the cell membrane. The protein resides in the cell junction. The protein localises to the early endosome. It is found in the late endosome. Its subcellular location is the lysosome. In terms of biological role, receptor for the C-X-C chemokine CXCL12/SDF-1 that transduces a signal by increasing intracellular calcium ion levels and enhancing MAPK1/MAPK3 activation. Involved in the AKT signaling cascade. Plays a role in regulation of cell migration, e.g. during wound healing. Acts as a receptor for extracellular ubiquitin; leading to enhanced intracellular calcium ions and reduced cellular cAMP levels. Binds bacterial lipopolysaccharide (LPS) et mediates LPS-induced inflammatory response, including TNF secretion by monocytes. Involved in hematopoiesis and in cardiac ventricular septum formation. Also plays an essential role in vascularization of the gastrointestinal tract, probably by regulating vascular branching and/or remodeling processes in endothelial cells. Involved in cerebellar development. In the CNS, could mediate hippocampal-neuron survival. This chain is C-X-C chemokine receptor type 4 (CXCR4), found in Papio anubis (Olive baboon).